Consider the following 350-residue polypeptide: Beta-ketodecanoyl-[acyl-carrier-protein] synthase (350 aa).

C133 is a catalytic residue.

It belongs to the thiolase-like superfamily. Beta-ketoacyl-ACP synthases family.

It catalyses the reaction octanoyl-CoA + malonyl-[ACP] + H(+) = 3-oxodecanoyl-[ACP] + CO2 + CoA. It participates in lipid metabolism; fatty acid biosynthesis. Catalyzes the condensation of octanoyl-CoA, obtained from exogenously supplied fatty acids via beta-oxidation, with malonyl-[acyl-carrier protein], forming 3-oxodecanoyl-[acyl-carrier protein], an intermediate of the fatty acid elongation cycle that can then be extended to supply all of the cellular fatty acid needs. The enzyme thereby shunts fatty acid degradation intermediates from the beta-oxidation pathway into de novo fatty acid biosynthesis. In Pseudomonas aeruginosa (strain ATCC 15692 / DSM 22644 / CIP 104116 / JCM 14847 / LMG 12228 / 1C / PRS 101 / PAO1), this protein is Beta-ketodecanoyl-[acyl-carrier-protein] synthase.